Here is a 233-residue protein sequence, read N- to C-terminus: Adenosylcobinamide-GDP ribazoletransferase (233 aa).

The next 7 membrane-spanning stretches (helical) occupy residues 24–44 (LWAF…VLYL), 46–66 (LPLS…LLHL), 96–116 (IAGL…LQLV), 117–137 (PFYA…LALA), 156–176 (SGQL…VVVY), 184–204 (LLGL…FGGI), and 209–229 (IGAI…FAGA).

The protein belongs to the CobS family. The cofactor is Mg(2+).

It localises to the cell membrane. It catalyses the reaction alpha-ribazole + adenosylcob(III)inamide-GDP = adenosylcob(III)alamin + GMP + H(+). The enzyme catalyses alpha-ribazole 5'-phosphate + adenosylcob(III)inamide-GDP = adenosylcob(III)alamin 5'-phosphate + GMP + H(+). Its pathway is cofactor biosynthesis; adenosylcobalamin biosynthesis; adenosylcobalamin from cob(II)yrinate a,c-diamide: step 7/7. Functionally, joins adenosylcobinamide-GDP and alpha-ribazole to generate adenosylcobalamin (Ado-cobalamin). Also synthesizes adenosylcobalamin 5'-phosphate from adenosylcobinamide-GDP and alpha-ribazole 5'-phosphate. This Thermococcus onnurineus (strain NA1) protein is Adenosylcobinamide-GDP ribazoletransferase.